Reading from the N-terminus, the 227-residue chain is Cytochrome c oxidase subunit 2 (227 aa).

The Mitochondrial intermembrane portion of the chain corresponds to 1-14; that stretch reads MAYPFQLGLQDASS. Residues 15–45 form a helical membrane-spanning segment; sequence PIMEELMNFHDHTLMIVFLISSLVLYLMALM. Residues 46–59 are Mitochondrial matrix-facing; it reads LSTKLIHTSTMDAQ. A helical transmembrane segment spans residues 60–87; that stretch reads EVETIWTILPAIILIMIALPSLRILYMM. Residues 88-227 lie on the Mitochondrial intermembrane side of the membrane; the sequence is DEINNPILTV…LFENWSMSMT (140 aa). H161, C196, E198, C200, H204, and M207 together coordinate Cu cation. Position 198 (E198) interacts with Mg(2+).

The protein belongs to the cytochrome c oxidase subunit 2 family. As to quaternary structure, component of the cytochrome c oxidase (complex IV, CIV), a multisubunit enzyme composed of 14 subunits. The complex is composed of a catalytic core of 3 subunits MT-CO1, MT-CO2 and MT-CO3, encoded in the mitochondrial DNA, and 11 supernumerary subunits COX4I, COX5A, COX5B, COX6A, COX6B, COX6C, COX7A, COX7B, COX7C, COX8 and NDUFA4, which are encoded in the nuclear genome. The complex exists as a monomer or a dimer and forms supercomplexes (SCs) in the inner mitochondrial membrane with NADH-ubiquinone oxidoreductase (complex I, CI) and ubiquinol-cytochrome c oxidoreductase (cytochrome b-c1 complex, complex III, CIII), resulting in different assemblies (supercomplex SCI(1)III(2)IV(1) and megacomplex MCI(2)III(2)IV(2)). Found in a complex with TMEM177, COA6, COX18, COX20, SCO1 and SCO2. Interacts with TMEM177 in a COX20-dependent manner. Interacts with COX20. Interacts with COX16. It depends on Cu cation as a cofactor.

The protein resides in the mitochondrion inner membrane. It carries out the reaction 4 Fe(II)-[cytochrome c] + O2 + 8 H(+)(in) = 4 Fe(III)-[cytochrome c] + 2 H2O + 4 H(+)(out). Functionally, component of the cytochrome c oxidase, the last enzyme in the mitochondrial electron transport chain which drives oxidative phosphorylation. The respiratory chain contains 3 multisubunit complexes succinate dehydrogenase (complex II, CII), ubiquinol-cytochrome c oxidoreductase (cytochrome b-c1 complex, complex III, CIII) and cytochrome c oxidase (complex IV, CIV), that cooperate to transfer electrons derived from NADH and succinate to molecular oxygen, creating an electrochemical gradient over the inner membrane that drives transmembrane transport and the ATP synthase. Cytochrome c oxidase is the component of the respiratory chain that catalyzes the reduction of oxygen to water. Electrons originating from reduced cytochrome c in the intermembrane space (IMS) are transferred via the dinuclear copper A center (CU(A)) of subunit 2 and heme A of subunit 1 to the active site in subunit 1, a binuclear center (BNC) formed by heme A3 and copper B (CU(B)). The BNC reduces molecular oxygen to 2 water molecules using 4 electrons from cytochrome c in the IMS and 4 protons from the mitochondrial matrix. This is Cytochrome c oxidase subunit 2 (MT-CO2) from Gerbillus gerbillus (Lesser Egyptian gerbil).